Reading from the N-terminus, the 420-residue chain is Reticulon-4 receptor-like 2 (420 aa).

The N-terminal stretch at 1 to 30 (MLPGLRRLLQGPASACLLLTLLALPSVTPS) is a signal peptide. 2 cysteine pairs are disulfide-bonded: Cys-31–Cys-37 and Cys-35–Cys-46. Residues 31–60 (CPMLCTCYSSPPTVSCQANNFSSVPLSLPP) form the LRRNT domain. N-linked (GlcNAc...) asparagine glycosylation is present at Asn-50. LRR repeat units follow at residues 61–82 (STQR…TFGP), 83–104 (NLLT…TFRH), 107–129 (ALEE…TFQG), 132–153 (RLQS…IFRG), 156–177 (SLQY…LFAD), 180–201 (NLSH…VFRG), 204–225 (SLDR…AFHG), and 228–249 (RLTI…ALAD). An N-linked (GlcNAc...) asparagine glycan is attached at Asn-93. A glycan (N-linked (GlcNAc...) asparagine) is linked at Asn-236. Residues 261–312 (NPWACDCRARPLWAWFQRARVSSSDVTCATPPERQGRDLRALRDSDFQACPP) enclose the LRRCT domain. 2 disulfides stabilise this stretch: Cys-265/Cys-288 and Cys-267/Cys-310. The segment at 286 to 399 (VTCATPPERQ…CQAPADSRGP (114 aa)) is disordered. Basic and acidic residues predominate over residues 294-306 (RQGRDLRALRDSD). The segment at 315 to 327 (PTRPGSRARGNSS) is important for interaction with MAG. Basic and acidic residues predominate over residues 351-360 (LPAEDSRGRQ). Gly-398 carries the GPI-anchor amidated glycine lipid modification. The propeptide at 399 to 420 (PALSAGLRTPLLCLLPLALHHL) is removed in mature form.

Belongs to the Nogo receptor family. In terms of assembly, interaction with MAG is controversial, and may be indirect. Interacts with MAG. Does not interact with OMG and RTN4. Post-translationally, undergoes zinc metalloproteinase-mediated ectodomain shedding in neuroblastoma cells; is released both as a full-length ectodomain and an N-terminal fragment containing the leucine-rich repeat (LRR) region of the protein. N-glycosylated. Detected in brain. Detected in hippocampus neurons (at protein level).

The protein localises to the cell membrane. The protein resides in the membrane raft. Its subcellular location is the cell projection. It localises to the dendrite. It is found in the axon. The protein localises to the perikaryon. In terms of biological role, cell surface receptor that plays a functionally redundant role in the inhibition of neurite outgrowth mediated by MAG. Plays a functionally redundant role in postnatal brain development. Contributes to normal axon migration across the brain midline and normal formation of the corpus callosum. Does not seem to play a significant role in regulating axon regeneration in the adult central nervous system. Protects motoneurons against apoptosis; protection against apoptosis is probably mediated by MAG. Like other family members, plays a role in restricting the number dendritic spines and the number of synapses that are formed during brain development. Signaling mediates activation of Rho and downstream reorganization of the actin cytoskeleton. The protein is Reticulon-4 receptor-like 2 of Mus musculus (Mouse).